A 424-amino-acid chain; its full sequence is CinA-like protein (424 aa).

Belongs to the CinA family.

The chain is CinA-like protein from Shewanella pealeana (strain ATCC 700345 / ANG-SQ1).